Reading from the N-terminus, the 295-residue chain is Putative enoyl reductase C646.07c (295 aa).

The Cytoplasmic portion of the chain corresponds to 1 to 84 (MSITLSSRGR…KDLGPQIGWR (84 aa)). Residues 85–105 (TVFMIEYLGPLVIHLFFILNY) traverse the membrane as a helical segment. The Lumenal segment spans residues 106–157 (KWIYRKDYNLCLNQKIAFVLVMLHFMKREYESIFVHRFSLATMPLRNIFKNC). A helical membrane pass occupies residues 158-178 (AHYHLLSGLFLAYFIYGPWHA). The Cytoplasmic segment spans residues 179 to 186 (NDYIKPNH). The chain crosses the membrane as a helical span at residues 187 to 207 (LLFLIVGWAFAVLSNFRTHII). Topologically, residues 208-223 (LRDLRPAGSKKRVIPT) are lumenal. Residues 224 to 246 (GYGFNLVSFPNYFFESLGWLFFA) traverse the membrane as a helical segment. Residues 247–250 (LLTK) are Cytoplasmic-facing. Residues 251 to 268 (SWASWIFLFVGSAQMFVW) traverse the membrane as a helical segment. Residues 269-295 (AKKKHARYLKEFPNYPRSRKIMIPFFL) lie on the Lumenal side of the membrane.

It belongs to the steroid 5-alpha reductase family.

It is found in the endoplasmic reticulum membrane. It carries out the reaction a (2E)-enoyl-CoA + NADPH + H(+) = a 2,3-saturated acyl-CoA + NADP(+). The sequence is that of Putative enoyl reductase C646.07c from Schizosaccharomyces pombe (strain 972 / ATCC 24843) (Fission yeast).